Reading from the N-terminus, the 215-residue chain is Probable transaldolase (215 aa).

Lysine 83 functions as the Schiff-base intermediate with substrate in the catalytic mechanism.

The protein belongs to the transaldolase family. Type 3B subfamily.

Its subcellular location is the cytoplasm. It carries out the reaction D-sedoheptulose 7-phosphate + D-glyceraldehyde 3-phosphate = D-erythrose 4-phosphate + beta-D-fructose 6-phosphate. It functions in the pathway carbohydrate degradation; pentose phosphate pathway; D-glyceraldehyde 3-phosphate and beta-D-fructose 6-phosphate from D-ribose 5-phosphate and D-xylulose 5-phosphate (non-oxidative stage): step 2/3. Its function is as follows. Transaldolase is important for the balance of metabolites in the pentose-phosphate pathway. In Pelotomaculum thermopropionicum (strain DSM 13744 / JCM 10971 / SI), this protein is Probable transaldolase.